The sequence spans 298 residues: Lipoyl synthase (298 aa).

Cys43, Cys48, Cys54, Cys69, Cys73, Cys76, and Ser280 together coordinate [4Fe-4S] cluster. The 215-residue stretch at 55–269 (FSSGTATFLI…AACGRGMGIP (215 aa)) folds into the Radical SAM core domain.

It belongs to the radical SAM superfamily. Lipoyl synthase family. It depends on [4Fe-4S] cluster as a cofactor.

Its subcellular location is the cytoplasm. The catalysed reaction is [[Fe-S] cluster scaffold protein carrying a second [4Fe-4S](2+) cluster] + N(6)-octanoyl-L-lysyl-[protein] + 2 oxidized [2Fe-2S]-[ferredoxin] + 2 S-adenosyl-L-methionine + 4 H(+) = [[Fe-S] cluster scaffold protein] + N(6)-[(R)-dihydrolipoyl]-L-lysyl-[protein] + 4 Fe(3+) + 2 hydrogen sulfide + 2 5'-deoxyadenosine + 2 L-methionine + 2 reduced [2Fe-2S]-[ferredoxin]. Its pathway is protein modification; protein lipoylation via endogenous pathway; protein N(6)-(lipoyl)lysine from octanoyl-[acyl-carrier-protein]: step 2/2. Functionally, catalyzes the radical-mediated insertion of two sulfur atoms into the C-6 and C-8 positions of the octanoyl moiety bound to the lipoyl domains of lipoate-dependent enzymes, thereby converting the octanoylated domains into lipoylated derivatives. The chain is Lipoyl synthase from Nitratidesulfovibrio vulgaris (strain ATCC 29579 / DSM 644 / CCUG 34227 / NCIMB 8303 / VKM B-1760 / Hildenborough) (Desulfovibrio vulgaris).